Consider the following 472-residue polypeptide: Cysteine--tRNA ligase (472 aa).

Cysteine 29 is a Zn(2+) binding site. The 'HIGH' region signature appears at 31-41 (PTVYNYIHIGN). Zn(2+)-binding residues include cysteine 214, histidine 239, and glutamate 243. The short motif at 273–277 (KMSKS) is the 'KMSKS' region element. Lysine 276 is an ATP binding site.

This sequence belongs to the class-I aminoacyl-tRNA synthetase family. In terms of assembly, monomer. Requires Zn(2+) as cofactor.

The protein localises to the cytoplasm. The catalysed reaction is tRNA(Cys) + L-cysteine + ATP = L-cysteinyl-tRNA(Cys) + AMP + diphosphate. This is Cysteine--tRNA ligase from Lactobacillus gasseri (strain ATCC 33323 / DSM 20243 / BCRC 14619 / CIP 102991 / JCM 1131 / KCTC 3163 / NCIMB 11718 / NCTC 13722 / AM63).